Reading from the N-terminus, the 280-residue chain is Orotidine 5'-phosphate decarboxylase (280 aa).

Substrate contacts are provided by residues aspartate 40, 62–64 (KTH), 93–102 (DRKFVDIGNT), tyrosine 228, and arginine 246. Lysine 95 serves as the catalytic Proton donor.

It belongs to the OMP decarboxylase family.

It carries out the reaction orotidine 5'-phosphate + H(+) = UMP + CO2. It functions in the pathway pyrimidine metabolism; UMP biosynthesis via de novo pathway; UMP from orotate: step 2/2. This is Orotidine 5'-phosphate decarboxylase (PYRG) from Solorina crocea.